Reading from the N-terminus, the 593-residue chain is FAD-binding monooxygenase acrE (593 aa).

Residues 61-64 (TWRF), 73-74 (DS), and Y79 each bind FAD. NADP(+) is bound at residue 71 to 73 (RVD). NADP(+) contacts are provided by residues 200-206 (TGASGVQ) and 223-224 (RS).

This sequence belongs to the FAD-binding monooxygenase family. Requires FAD as cofactor.

It functions in the pathway secondary metabolite biosynthesis. FAD-binding monooxygenase; part of the cluster that mediates the biosynthesis of acurin A, a highly reduced polyketide coupled to a serine via a peptide bond. The activities of the highly reducing polyketide synthase acrA and the nonribosomal peptide synthetase acrB are collectively responsible for the synthesis of the acurin A core structure with a heptaketide backbone produced by acrA covalently fused to a L-serine by acrB. After the formation of the PK-NRP hybrid product, it is detached from acrB by reductive release to set up the formation of the lactam ring by aldol condensation. The hydrolyase acrC then catalyzes water loss to generate a double bond in the ring. This double bond is probably reduced, which is followed by three oxidations at C-22 to generate the carboxylic acid moiety, involving probably the FAD-binding monooxygenase acrE and the cytochrome P450 monooxygenases acrD and acrF. Finally, a last methylation step performed by the O-methyltransferase acrG leads to the production of acurin A. The sequence is that of FAD-binding monooxygenase acrE from Aspergillus aculeatus (strain ATCC 16872 / CBS 172.66 / WB 5094).